A 952-amino-acid polypeptide reads, in one-letter code: MNNWKRFTFFDIETVKQVEKEDGSSLQKLSITCTTSGRGSLIIGDAEGFINFVDREFGISSFQAYQQSVSLIYQLKERNFLSSVGHDDIGGAAILKIWNLDKTDKNEQPICVRSIKLEKSVTVTCFTLLEDLSQIIVGLANGEIIIIRADIFRDKVIKQKIIKVPNDSPITGLGFFPTKSQQSASAGAVLFVVTTTHVITYHTAHKDQETIIDDEGGDIGSFLMSDDGSPIIARSDAIYFYNVDGRGPCFGFTGVKTKVLWFRSYLVVIGYDTNNTNALFPGAVVGGQNSIGGLGSQTGSIGSPSVMVQNTKNNVLNIYDLKNKYIGFTEKFDTVSHICSEWGSIFIFGADGKVFQLEEKDTQTKLETLFKKHSYQVAIDLAKSQHYDNSAIADVYREYGDRLYAKGDYDGAITQYLCTIGQLEPSYVIRKFLDAQRIHNLTSYIQALHEKNLATANHTTLLLNCYTKLKDVKKLDHFIMTDNGTFDVETAIKVCRQGGYFDRALFLASKHSRHDWYLKILLEDLNEYRKALDYIQTLDWEEADKNLKKYGKQLVSEIPEETTGVLMKLCTNYQPVQAFDSLTALNLNGLTISNQTTTTTTVTNVTNNNNQNNNSNNNNQNNNNNNNNNIGFKQKSAPEEFIHIFVSQADWLVKFLEYMVQQGNNESSLIYNTLLELYLRDDVNQTDDERIKRKAKAYEFLTNPKSKFDQDHALILVQVHNWKEGVLYLYEKLELFNEIIEYHMENNDYDGLIKACKRYGVKDPNLWVRALSFFSTNKQDCQDEIIEVLTNIDKENLIPPLLVIQILSQNKNTTLAVIKDYISRRLSQETQQIDKDYTQIRQYADETEKMRHEINELRTNSKIFQQTKCIACLLALDLPSVHFLCQHSFHQRCLGENERECPSCAGANKRIQEIKRSQADSANQHDQFFKLLRSSPDGFTTVSEYFGRGILN.

CHCR repeat units follow at residues 416 to 563 (YLCT…EETT) and 629 to 783 (NIGF…DCQD). Over residues 608 to 629 (NNNQNNNSNNNNQNNNNNNNNN) the composition is skewed to low complexity. Positions 608-632 (NNNQNNNSNNNNQNNNNNNNNNIGF) are disordered. Positions 837–868 (YTQIRQYADETEKMRHEINELRTNSKIFQQTK) form a coiled coil. The RING-type; atypical zinc finger occupies 869–905 (CIACLLALDLPSVHFLCQHSFHQRCLGENERECPSCA).

It belongs to the VPS11 family.

It is found in the vacuole membrane. Functionally, may play a role in vesicle-mediated protein trafficking. The polypeptide is Vacuolar protein sorting-associated protein 11 homolog (vps11) (Dictyostelium discoideum (Social amoeba)).